A 348-amino-acid polypeptide reads, in one-letter code: GTPase Obg (348 aa).

Positions 1 to 160 constitute an Obg domain; sequence MHFLDQAKIF…MWVWLRLKLL (160 aa). Positions 120–145 are disordered; the sequence is RGGDGGRGNASYKTSTNRAPRQHGPG. Positions 161–328 constitute an OBG-type G domain; the sequence is ADAGLVGLPN…VLDKLLEAIG (168 aa). GTP is bound by residues 167–174, 192–196, 213–216, 280–283, and 309–311; these read GLPNAGKS, FTTLR, DIPG, NKID, and SGA. 2 residues coordinate Mg(2+): S174 and T194. The interval 326 to 348 is disordered; that stretch reads AIGQPEPGPDADEEEKGGDWSPI.

It belongs to the TRAFAC class OBG-HflX-like GTPase superfamily. OBG GTPase family. In terms of assembly, monomer. Requires Mg(2+) as cofactor.

The protein resides in the cytoplasm. Functionally, an essential GTPase which binds GTP, GDP and possibly (p)ppGpp with moderate affinity, with high nucleotide exchange rates and a fairly low GTP hydrolysis rate. Plays a role in control of the cell cycle, stress response, ribosome biogenesis and in those bacteria that undergo differentiation, in morphogenesis control. The sequence is that of GTPase Obg from Sphingopyxis alaskensis (strain DSM 13593 / LMG 18877 / RB2256) (Sphingomonas alaskensis).